The following is a 523-amino-acid chain: Glycine betaine transporter 1 (523 aa).

Helical transmembrane passes span 33–53, 71–91, 109–129, 165–185, 214–234, 251–271, 286–306, 337–357, 372–392, 420–440, 467–487, and 496–516; these read VFGI…VLDA, FDWL…ALIV, SFMS…LMFW, FHWG…LAFF, IVDI…LGLG, GLGL…VSVV, MVVA…ASLG, WTVF…MFIA, VLIV…GLAI, VLPF…VFFI, VFWA…GGSE, and AIST…SLLM.

Belongs to the BCCT transporter (TC 2.A.15) family.

Its subcellular location is the cell inner membrane. Involved in the uptake of the osmoprotectant glycine betaine. This chain is Glycine betaine transporter 1, found in Vibrio parahaemolyticus serotype O3:K6 (strain RIMD 2210633).